The chain runs to 512 residues: Sporulation-regulated protein 3 (512 aa).

Residues 31-68 (RQSSQGQYAVDSHPPKSPELKHRRQRSSSFVNGKCRNR) form a disordered region. The region spanning 106–365 (NGIDFTLMVA…EKCRSEMLRT (260 aa)) is the Septin-type G domain. The tract at residues 116 to 123 (GQSGLGKT) is G1 motif. GTP-binding positions include 116-123 (GQSGLGKT), Gly168, 247-255 (KSDLLTKEE), and Arg315. The tract at residues 165–168 (DTPG) is G3 motif. The G4 motif stretch occupies residues 246–249 (AKSD). Coiled coils occupy residues 376-406 (TKSVDITEEQRKFLEEEMNFDEIEENKLKNY) and 451-496 (RDWK…KSSN).

It belongs to the TRAFAC class TrmE-Era-EngA-EngB-Septin-like GTPase superfamily. Septin GTPase family. In terms of assembly, interacts with other septin proteins such as SPR28 to form a ring at the bud neck.

It is found in the prospore membrane. The protein localises to the bud neck. Its function is as follows. Septins are GTPases involved in cytokinesis that assemble into filaments and form a ring at the cleavage site. May act by recruiting MYO1 and HOF1, a protein involved in septation, to the site of cleavage. Septins are also involved in cell morphogenesis, bud site selection, chitin deposition, cell cycle regulation, cell compartmentalization and spore wall formation. The protein is Sporulation-regulated protein 3 (SPR3) of Saccharomyces cerevisiae (strain ATCC 204508 / S288c) (Baker's yeast).